The sequence spans 303 residues: D-alanine--D-alanine ligase (303 aa).

Positions 103–293 (KTLFIKGGIP…FAQLCEKILE (191 aa)) constitute an ATP-grasp domain. 130–179 (PYVIKPSRQGSSIGIEFVYDIKELDQAIKKSTQYDHVVLAEALITGKELT) lines the ATP pocket. Residues Asp-247, Glu-260, and Asn-262 each coordinate Mg(2+).

Belongs to the D-alanine--D-alanine ligase family. It depends on Mg(2+) as a cofactor. The cofactor is Mn(2+).

It localises to the cytoplasm. The enzyme catalyses 2 D-alanine + ATP = D-alanyl-D-alanine + ADP + phosphate + H(+). It functions in the pathway cell wall biogenesis; peptidoglycan biosynthesis. Functionally, cell wall formation. This Methylacidiphilum infernorum (isolate V4) (Methylokorus infernorum (strain V4)) protein is D-alanine--D-alanine ligase.